The sequence spans 313 residues: tRNA dimethylallyltransferase (313 aa).

ATP is bound at residue 9 to 16; that stretch reads GPTAVGKT. 11–16 provides a ligand contact to substrate; the sequence is TAVGKT. An interaction with substrate tRNA region spans residues 34 to 37; sequence DSMQ.

This sequence belongs to the IPP transferase family. In terms of assembly, monomer. Mg(2+) serves as cofactor.

The catalysed reaction is adenosine(37) in tRNA + dimethylallyl diphosphate = N(6)-dimethylallyladenosine(37) in tRNA + diphosphate. Its function is as follows. Catalyzes the transfer of a dimethylallyl group onto the adenine at position 37 in tRNAs that read codons beginning with uridine, leading to the formation of N6-(dimethylallyl)adenosine (i(6)A). This Lachnoclostridium phytofermentans (strain ATCC 700394 / DSM 18823 / ISDg) (Clostridium phytofermentans) protein is tRNA dimethylallyltransferase.